Reading from the N-terminus, the 339-residue chain is Probable cytosolic iron-sulfur protein assembly protein CIAO1 (339 aa).

WD repeat units follow at residues 14-53, 59-98, 103-142, 148-187, 192-231, 250-289, and 301-339; these read HPDS…WICK, GHQR…FECV, GHEN…EYEC, SHTQ…WVCC, GHES…NEQG, FHSR…DPQQ, and AHSQ…PEGL. The LYR motif; required for interaction with HSC20 motif lies at 176–178; that stretch reads LYR.

This sequence belongs to the WD repeat CIA1 family. Component of the CIA complex. Interacts with CIAO2A and forms a complex with CIAO2B and MMS19; the interactions with CIAO2A and CIAO2B are mutually exclusive. Interacts with CHD1L, ERCC2, IREB2 and POLD1. Component of the MMXD complex, which includes CIAO1, ERCC2, CIAO2B, MMS19 and SLC25A5. Interacts with WT1. Interacts with CIAO3. Interacts (via LYR motif) with HSC20.

The protein localises to the cytoplasm. In terms of biological role, key component of the cytosolic iron-sulfur protein assembly (CIA) complex, a multiprotein complex that mediates the incorporation of iron-sulfur cluster into extramitochondrial Fe/S proteins. As a CIA complex component, interacts specifically with CIAO2A or CIAO2B and MMS19 to assist different branches of iron-sulfur protein assembly, depending of its interactors. The complex CIAO1:CIAO2B:MMS19 binds to and facilitates the assembly of most cytosolic-nuclear Fe/S proteins. CIAO1:CIAO2A specifically matures ACO1 and stabilizes IREB2. Seems to specifically modulate the transactivation activity of WT1. As part of the mitotic spindle-associated MMXD complex it may play a role in chromosome segregation. The polypeptide is Probable cytosolic iron-sulfur protein assembly protein CIAO1 (Homo sapiens (Human)).